A 206-amino-acid polypeptide reads, in one-letter code: Nucleoside triphosphate pyrophosphatase (206 aa).

D78 functions as the Proton acceptor in the catalytic mechanism.

It belongs to the Maf family. It depends on a divalent metal cation as a cofactor.

The protein localises to the cytoplasm. The enzyme catalyses a ribonucleoside 5'-triphosphate + H2O = a ribonucleoside 5'-phosphate + diphosphate + H(+). It carries out the reaction a 2'-deoxyribonucleoside 5'-triphosphate + H2O = a 2'-deoxyribonucleoside 5'-phosphate + diphosphate + H(+). Functionally, nucleoside triphosphate pyrophosphatase. May have a dual role in cell division arrest and in preventing the incorporation of modified nucleotides into cellular nucleic acids. This Prochlorococcus marinus (strain MIT 9312) protein is Nucleoside triphosphate pyrophosphatase.